The following is a 135-amino-acid chain: ATP synthase epsilon chain, chloroplastic (135 aa).

This sequence belongs to the ATPase epsilon chain family. In terms of assembly, F-type ATPases have 2 components, CF(1) - the catalytic core - and CF(0) - the membrane proton channel. CF(1) has five subunits: alpha(3), beta(3), gamma(1), delta(1), epsilon(1). CF(0) has three main subunits: a, b and c.

It localises to the plastid. It is found in the chloroplast thylakoid membrane. In terms of biological role, produces ATP from ADP in the presence of a proton gradient across the membrane. The sequence is that of ATP synthase epsilon chain, chloroplastic from Marchantia polymorpha (Common liverwort).